The following is a 235-amino-acid chain: Small ribosomal subunit protein uS3 (235 aa).

The KH type-2 domain occupies 39–107 (IREILHKELK…DVVINIVEIR (69 aa)). The segment at 215-235 (QDKRMAESDGGGSSRPRRDAA) is disordered.

Belongs to the universal ribosomal protein uS3 family. In terms of assembly, part of the 30S ribosomal subunit. Forms a tight complex with proteins S10 and S14.

Binds the lower part of the 30S subunit head. Binds mRNA in the 70S ribosome, positioning it for translation. The polypeptide is Small ribosomal subunit protein uS3 (Rhodopseudomonas palustris (strain TIE-1)).